Reading from the N-terminus, the 690-residue chain is Elongation factor G (690 aa).

One can recognise a tr-type G domain in the interval 8-283; sequence ERYRNFGIMA…AVVDFMPSPL (276 aa). Residues 17-24, 81-85, and 135-138 each bind GTP; these read AHIDAGKT, DTPGH, and NKLD.

It belongs to the TRAFAC class translation factor GTPase superfamily. Classic translation factor GTPase family. EF-G/EF-2 subfamily.

Its subcellular location is the cytoplasm. Catalyzes the GTP-dependent ribosomal translocation step during translation elongation. During this step, the ribosome changes from the pre-translocational (PRE) to the post-translocational (POST) state as the newly formed A-site-bound peptidyl-tRNA and P-site-bound deacylated tRNA move to the P and E sites, respectively. Catalyzes the coordinated movement of the two tRNA molecules, the mRNA and conformational changes in the ribosome. This is Elongation factor G from Novosphingobium aromaticivorans (strain ATCC 700278 / DSM 12444 / CCUG 56034 / CIP 105152 / NBRC 16084 / F199).